Here is an 87-residue protein sequence, read N- to C-terminus: Pro-gurmarin (87 aa).

The first 20 residues, 1–20 (MAKFAAIVLLILVASATVNA), serve as a signal peptide directing secretion. Residues 21 to 52 (VKEHDELPTTGMSRKILLQPVFKSLIISIAEG) constitute a propeptide that is removed on maturation. At Gln-53 the chain carries Pyrrolidone carboxylic acid. 3 disulfide bridges follow: Cys-55–Cys-70, Cys-62–Cys-75, and Cys-69–Cys-85.

In terms of tissue distribution, expressed in leaves (at protein level).

Peptide that strongly, but reversibly, suppresses the sweet taste-response to various sweeteners, including sugars, sweet amino acids and the artificial sweetener saccharin. In rodents, potentially binds to a sweet taste receptor present on apical microvilli of a subset of taste bud cells. Highly effective at blocking the sweet taste-response in rodents such as rats and mice, though mice may possess a mix of gurmarin-sensitive and -insensitive receptors. Has almost no effect on the sweet taste-response in humans. Inhibits Staphylococcus aureus biofilm formation without affecting bacterial viability. May be one of at least 9 different disulfide-rich peptides produced with varying properties. This Gymnema sylvestre (Gurmar) protein is Pro-gurmarin.